The primary structure comprises 110 residues: Nucleoid-associated protein KPN78578_04440 (110 aa).

Belongs to the YbaB/EbfC family. In terms of assembly, homodimer.

It is found in the cytoplasm. It localises to the nucleoid. Binds to DNA and alters its conformation. May be involved in regulation of gene expression, nucleoid organization and DNA protection. The sequence is that of Nucleoid-associated protein KPN78578_04440 from Klebsiella pneumoniae subsp. pneumoniae (strain ATCC 700721 / MGH 78578).